The primary structure comprises 150 residues: Histone deacetylase complex subunit SAP18 (150 aa).

Belongs to the SAP18 family. As to quaternary structure, forms a complex with SIN3 and histone deacetylase. Interacts with the N-terminal residues of TRL. Interacts with BCD; in vitro and yeast cells.

The protein resides in the nucleus. It localises to the cytoplasm. Involved in the tethering of the SIN3 complex to core histone proteins. Interacts with bicoid (bcd) to repress transcription of bicoid target genes in the anterior tip of the embryo; a process known as retraction. Interacts with Trl and binds to Polycomb response elements at the bithorax complex. May contribute to the regulation of other homeotic gene expressions. In Drosophila melanogaster (Fruit fly), this protein is Histone deacetylase complex subunit SAP18 (Bin1).